A 271-amino-acid chain; its full sequence is Formamidopyrimidine-DNA glycosylase (271 aa).

The active-site Schiff-base intermediate with DNA is proline 2. Glutamate 3 serves as the catalytic Proton donor. The active-site Proton donor; for beta-elimination activity is lysine 58. Positions 92, 111, and 152 each coordinate DNA. The FPG-type zinc-finger motif lies at 237–271 (FVYGREGEACKQCGRVLKHATIGQRATVWCGSCQR). The Proton donor; for delta-elimination activity role is filled by arginine 261.

Belongs to the FPG family. As to quaternary structure, monomer. It depends on Zn(2+) as a cofactor.

It carries out the reaction Hydrolysis of DNA containing ring-opened 7-methylguanine residues, releasing 2,6-diamino-4-hydroxy-5-(N-methyl)formamidopyrimidine.. The enzyme catalyses 2'-deoxyribonucleotide-(2'-deoxyribose 5'-phosphate)-2'-deoxyribonucleotide-DNA = a 3'-end 2'-deoxyribonucleotide-(2,3-dehydro-2,3-deoxyribose 5'-phosphate)-DNA + a 5'-end 5'-phospho-2'-deoxyribonucleoside-DNA + H(+). In terms of biological role, involved in base excision repair of DNA damaged by oxidation or by mutagenic agents. Acts as a DNA glycosylase that recognizes and removes damaged bases. Has a preference for oxidized purines, such as 7,8-dihydro-8-oxoguanine (8-oxoG). Has AP (apurinic/apyrimidinic) lyase activity and introduces nicks in the DNA strand. Cleaves the DNA backbone by beta-delta elimination to generate a single-strand break at the site of the removed base with both 3'- and 5'-phosphates. In Xanthomonas axonopodis pv. citri (strain 306), this protein is Formamidopyrimidine-DNA glycosylase.